The following is a 279-amino-acid chain: Vitamin B12-binding protein (279 aa).

A signal peptide spans 1–20 (MTFRFLCWLTGLLLCTAAYA). One can recognise a Fe/B12 periplasmic-binding domain in the interval 24–276 (RVISLAPHAT…QLAELKLAPS (253 aa)). A disulfide bridge connects residues cysteine 189 and cysteine 265.

Belongs to the BtuF family. As to quaternary structure, the complex is composed of two ATP-binding proteins (BtuD), two transmembrane proteins (BtuC) and a solute-binding protein (BtuF).

The protein resides in the periplasm. In terms of biological role, part of the ABC transporter complex BtuCDF involved in vitamin B12 import. Binds vitamin B12 and delivers it to the periplasmic surface of BtuC. The sequence is that of Vitamin B12-binding protein from Pectobacterium atrosepticum (strain SCRI 1043 / ATCC BAA-672) (Erwinia carotovora subsp. atroseptica).